The following is a 2073-amino-acid chain: Fatty acid synthase subunit beta (2073 aa).

Residues 1–459 (MVEAEQVHQS…VYSTDDAGDL (459 aa)) form an acetyltransferase region. S270 acts as the For acetyltransferase activity in catalysis. The interval 470–858 (ALAVMITEKV…TRGIMFWKEL (389 aa)) is enoyl reductase. S1122 is subject to Phosphoserine. The tract at residues 1155–1644 (GPEYTWFRAI…LPNTELITKL (490 aa)) is dehydratase. The active-site For dehydratase activity is H1361. Residues 1558 to 1667 (PVFVTPPTNS…VEVLNQETSE (110 aa)) enclose the MaoC-like domain. Residues 1645–2073 (SHTGMINGRK…LQNWDEYESS (429 aa)) form a malonyl/palmitoyl transferase region. The For malonyltransferase activity role is filled by S1828. The residue at position 2073 (S2073) is a Phosphoserine.

It belongs to the fungal fatty acid synthetase subunit beta family. [Alpha(6)beta(6)] hexamers of two multifunctional subunits (alpha and beta).

The enzyme catalyses acetyl-CoA + n malonyl-CoA + 2n NADPH + 4n H(+) = a long-chain-acyl-CoA + n CoA + n CO2 + 2n NADP(+).. It carries out the reaction holo-[ACP] + acetyl-CoA = acetyl-[ACP] + CoA. It catalyses the reaction holo-[ACP] + malonyl-CoA = malonyl-[ACP] + CoA. The catalysed reaction is a (3R)-hydroxyacyl-[ACP] = a (2E)-enoyl-[ACP] + H2O. The enzyme catalyses a 2,3-saturated acyl-[ACP] + NAD(+) = a (2E)-enoyl-[ACP] + NADH + H(+). It carries out the reaction (9Z)-octadecenoyl-[ACP] + H2O = (9Z)-octadecenoate + holo-[ACP] + H(+). Fatty acid synthetase catalyzes the formation of long-chain fatty acids from acetyl-CoA, malonyl-CoA and NADPH. The beta subunit contains domains for: [acyl-carrier-protein] acetyltransferase and malonyltransferase, S-acyl fatty acid synthase thioesterase, enoyl-[acyl-carrier-protein] reductase, and 3-hydroxypalmitoyl-[acyl-carrier-protein] dehydratase. This is Fatty acid synthase subunit beta (fas1) from Schizosaccharomyces pombe (strain 972 / ATCC 24843) (Fission yeast).